Consider the following 91-residue polypeptide: MARMIHCAKLGKEAEGLDFPPLPGELGKRLYESVSKEAWQGWLKQQTMLINENRLNMADPRARQYLMKQTEKYFFGEGADQASGYVPPAQD.

This sequence belongs to the Fe(2+)-trafficking protein family.

In terms of biological role, could be a mediator in iron transactions between iron acquisition and iron-requiring processes, such as synthesis and/or repair of Fe-S clusters in biosynthetic enzymes. The sequence is that of Probable Fe(2+)-trafficking protein from Burkholderia thailandensis (strain ATCC 700388 / DSM 13276 / CCUG 48851 / CIP 106301 / E264).